The following is a 354-amino-acid chain: Allantoicase (354 aa).

It belongs to the allantoicase family.

It carries out the reaction allantoate + H2O = (S)-ureidoglycolate + urea. The protein operates within nitrogen metabolism; (S)-allantoin degradation; (S)-ureidoglycolate from allantoate (aminidohydrolase route): step 1/1. Functionally, utilization of purines as secondary nitrogen sources, when primary sources are limiting. This chain is Allantoicase (alc-1), found in Neurospora crassa (strain ATCC 24698 / 74-OR23-1A / CBS 708.71 / DSM 1257 / FGSC 987).